Consider the following 148-residue polypeptide: NTR domain-containing protein (148 aa).

Positions 1-26 are cleaved as a signal peptide; that stretch reads MVCRFSYVQVVLILVVLSVIISWANA. 3 cysteine pairs are disulfide-bonded: C27-C96, C29-C122, and C40-C146. Positions 27–146 constitute an NTR domain; it reads CSCFPPDETR…LQLFNDPQWC (120 aa).

Prismatic layer of shell (at protein level). Expressed primarily in the mantle with highest level in the mantle edge and lower level in the mantle pallium.

Its subcellular location is the secreted. The protein is NTR domain-containing protein of Margaritifera margaritifera (Freshwater pearl mussel).